Consider the following 300-residue polypeptide: UDP-3-O-acyl-N-acetylglucosamine deacetylase (300 aa).

Residues H76, H235, and D239 each contribute to the Zn(2+) site. H262 serves as the catalytic Proton donor.

The protein belongs to the LpxC family. It depends on Zn(2+) as a cofactor.

The enzyme catalyses a UDP-3-O-[(3R)-3-hydroxyacyl]-N-acetyl-alpha-D-glucosamine + H2O = a UDP-3-O-[(3R)-3-hydroxyacyl]-alpha-D-glucosamine + acetate. It participates in glycolipid biosynthesis; lipid IV(A) biosynthesis; lipid IV(A) from (3R)-3-hydroxytetradecanoyl-[acyl-carrier-protein] and UDP-N-acetyl-alpha-D-glucosamine: step 2/6. Catalyzes the hydrolysis of UDP-3-O-myristoyl-N-acetylglucosamine to form UDP-3-O-myristoylglucosamine and acetate, the committed step in lipid A biosynthesis. This is UDP-3-O-acyl-N-acetylglucosamine deacetylase from Halorhodospira halophila (strain DSM 244 / SL1) (Ectothiorhodospira halophila (strain DSM 244 / SL1)).